The primary structure comprises 452 residues: L-seryl-tRNA(Sec) selenium transferase (452 aa).

Lysine 285 bears the N6-(pyridoxal phosphate)lysine mark.

This sequence belongs to the SelA family. Requires pyridoxal 5'-phosphate as cofactor.

The protein resides in the cytoplasm. The catalysed reaction is L-seryl-tRNA(Sec) + selenophosphate + H(+) = L-selenocysteinyl-tRNA(Sec) + phosphate. Its pathway is aminoacyl-tRNA biosynthesis; selenocysteinyl-tRNA(Sec) biosynthesis; selenocysteinyl-tRNA(Sec) from L-seryl-tRNA(Sec) (bacterial route): step 1/1. Functionally, converts seryl-tRNA(Sec) to selenocysteinyl-tRNA(Sec) required for selenoprotein biosynthesis. This is L-seryl-tRNA(Sec) selenium transferase from Aquifex aeolicus (strain VF5).